A 464-amino-acid chain; its full sequence is MKNTVLIKKIYRETDQFLSKEVMISGWIRTLRASNAFGFIEINDGSFFKNIQVVFDDKLGNFKEISKLPISSSISVVGTLVATPDAKQPFEIQAKEIVIEGMSNSDYPLQKKRHTFEYLRSIAHLRPRSNAFSATFRVRSVAAFAIHKFFQEQGFVYTHTPIITGSDCEGAGEMFRVTTLDPKAPELTKEGDIDYTKDFFGKETNLTVSGQLNAECFALAFRNIYTFGPTFRAENSNTTRHAAEFWMIEPEIAFADLQDDMELAEAMLKYVIKYVMDECPEELQFFNSFVDKGLLERLNHVVSSDFAKVTYTEAVEILEKCDKEFDYDVSWGIDLQTEHERYLTEEHFKKPLFVTDYPKEIKAFYMRMNEDNKTVAATDLLVPGIGEIIGGSQREERLDVLEARMAELGLKKEDYWWYLELRKYGETKHAGFGLGFERLIMYITGMTNIRDVIPFPRTPGTSEF.

This sequence belongs to the class-II aminoacyl-tRNA synthetase family. Homodimer.

The protein resides in the cytoplasm. The enzyme catalyses tRNA(Asn) + L-asparagine + ATP = L-asparaginyl-tRNA(Asn) + AMP + diphosphate + H(+). The protein is Asparagine--tRNA ligase of Clostridium botulinum (strain Eklund 17B / Type B).